A 235-amino-acid polypeptide reads, in one-letter code: Urease accessory protein UreF (235 aa).

Belongs to the UreF family. UreD, UreF and UreG form a complex that acts as a GTP-hydrolysis-dependent molecular chaperone, activating the urease apoprotein by helping to assemble the nickel containing metallocenter of UreC. The UreE protein probably delivers the nickel.

It is found in the cytoplasm. Functionally, required for maturation of urease via the functional incorporation of the urease nickel metallocenter. The sequence is that of Urease accessory protein UreF from Haemophilus influenzae (strain ATCC 51907 / DSM 11121 / KW20 / Rd).